The following is a 301-amino-acid chain: Eukaryotic translation initiation factor 3 subunit F (301 aa).

The MPN domain maps to 32 to 169 (VHVHPVALFS…IKSYISSPLG (138 aa)).

This sequence belongs to the eIF-3 subunit F family. Component of the eukaryotic translation initiation factor 3 (eIF-3) complex.

It is found in the cytoplasm. Functionally, component of the eukaryotic translation initiation factor 3 (eIF-3) complex, which is involved in protein synthesis of a specialized repertoire of mRNAs and, together with other initiation factors, stimulates binding of mRNA and methionyl-tRNAi to the 40S ribosome. The eIF-3 complex specifically targets and initiates translation of a subset of mRNAs involved in cell proliferation. This Mycosarcoma maydis (Corn smut fungus) protein is Eukaryotic translation initiation factor 3 subunit F.